The chain runs to 275 residues: Putative Ig-like V-type domain-containing protein FPV055 (275 aa).

Ig-like V-type domains are found at residues 25-122 (KTFV…MNLG) and 140-239 (PRRS…KSLS).

The sequence is that of Putative Ig-like V-type domain-containing protein FPV055 from Fowlpox virus (strain NVSL) (FPV).